A 513-amino-acid polypeptide reads, in one-letter code: GMP synthase [glutamine-hydrolyzing] (513 aa).

Positions 9-198 (LILVLDFGSQ…VRRVCDCIGE (190 aa)) constitute a Glutamine amidotransferase type-1 domain. C86 serves as the catalytic Nucleophile. Catalysis depends on residues H172 and E174. Residues 199–388 (WSMENFIEIE…LGIPEHLVWR (190 aa)) form the GMPS ATP-PPase domain. Residue 226–232 (SGGVDSS) coordinates ATP.

Homodimer.

The catalysed reaction is XMP + L-glutamine + ATP + H2O = GMP + L-glutamate + AMP + diphosphate + 2 H(+). It participates in purine metabolism; GMP biosynthesis; GMP from XMP (L-Gln route): step 1/1. In terms of biological role, catalyzes the synthesis of GMP from XMP. This Staphylococcus saprophyticus subsp. saprophyticus (strain ATCC 15305 / DSM 20229 / NCIMB 8711 / NCTC 7292 / S-41) protein is GMP synthase [glutamine-hydrolyzing].